Consider the following 278-residue polypeptide: Ferredoxin--NADP reductase A (278 aa).

Residues 3–103 (PGYTEETVLE…KRATGTLTIG (101 aa)) enclose the FAD-binding FR-type domain. Residues 52-55 (RAYS) and Thr118 contribute to the FAD site.

It belongs to the ferredoxin--NADP reductase type 1 family. FAD serves as cofactor.

It catalyses the reaction 2 reduced [4Fe-4S]-[ferredoxin] + NADP(+) + H(+) = 2 oxidized [4Fe-4S]-[ferredoxin] + NADPH. Its function is as follows. Transports electrons between NADPH and ferredoxin. Can transfer electrons to ferredoxins Fdx2 and Fdx8. Prefers NADPH to NADH. The protein is Ferredoxin--NADP reductase A of Sorangium cellulosum (strain So ce56) (Polyangium cellulosum (strain So ce56)).